The following is a 310-amino-acid chain: Zinc finger CCCH domain-containing protein 14 (310 aa).

Residues 56–75 form a disordered region; sequence ESLSPSPPSSSSPPSRVDTT. A coiled-coil region spans residues 84-129; sequence KLILEYDELNEHYELCLNRLQSLMTELDSLRHENDSLRFENSDLLK. A compositionally biased stretch (basic and acidic residues) spans 155 to 167; that stretch reads QISDSRSAKRNNQ. A disordered region spans residues 155–174; the sequence is QISDSRSAKRNNQERNSLPK. 2 C3H1-type zinc fingers span residues 232 to 260 and 270 to 298; these read MMKT…HGID and RYKT…HSLT.

In terms of tissue distribution, highly expressed in secondary cell wall-forming tissues and the xylem cells of roots. Expressed predominantly in inflorescence stems, flowers and siliques. Highly expressed in the basal portion of stems, where cells are undergoing secondary cell wall thickening.

Functionally, functions probably as a transcriptional factor that activates genes involved in secondary cell wall biosynthesis. May play a role in both transcriptional and post-transcriptional regulation. Binds to ssDNA, dsDNA, and ribohomopolymers in vitro. Maybe involved in post-transcriptional regulation of its target genes. Targets RNA of a polygalacturonase, a well-known cell wall modifying gene. Functions redudantly with C3H15 to regulate secondary cell wall formation. C3H14 and C3H15 have overlapping roles in the regulation of secondary cell wall formation and anther development. C3H14 may contribute more to secondary cell wall thickening while C3H15 could be more important in anther development. May regulate at both the transcriptional and post-transcriptional levels the expression of many genes involved in various biological processes, particularly those associated with cell wall metabolism and pollen development. This is Zinc finger CCCH domain-containing protein 14 from Arabidopsis thaliana (Mouse-ear cress).